A 424-amino-acid polypeptide reads, in one-letter code: Imidazolonepropionase (424 aa).

Positions 84 and 86 each coordinate Fe(3+). The Zn(2+) site is built by His84 and His86. 4-imidazolone-5-propanoate contacts are provided by Arg93, Tyr156, and His189. N-formimidoyl-L-glutamate is bound at residue Tyr156. His254 contributes to the Fe(3+) binding site. His254 is a binding site for Zn(2+). Glu257 is a 4-imidazolone-5-propanoate binding site. Asp328 contacts Fe(3+). Asp328 is a Zn(2+) binding site. 2 residues coordinate N-formimidoyl-L-glutamate: Asn330 and Gly332. Ser333 serves as a coordination point for 4-imidazolone-5-propanoate.

Belongs to the metallo-dependent hydrolases superfamily. HutI family. Zn(2+) is required as a cofactor. The cofactor is Fe(3+).

It is found in the cytoplasm. The catalysed reaction is 4-imidazolone-5-propanoate + H2O = N-formimidoyl-L-glutamate. Its pathway is amino-acid degradation; L-histidine degradation into L-glutamate; N-formimidoyl-L-glutamate from L-histidine: step 3/3. In terms of biological role, catalyzes the hydrolytic cleavage of the carbon-nitrogen bond in imidazolone-5-propanoate to yield N-formimidoyl-L-glutamate. It is the third step in the universal histidine degradation pathway. In Geobacillus thermodenitrificans (strain NG80-2), this protein is Imidazolonepropionase.